Reading from the N-terminus, the 96-residue chain is UPF0235 protein VIBHAR_03581 (96 aa).

It belongs to the UPF0235 family.

This is UPF0235 protein VIBHAR_03581 from Vibrio campbellii (strain ATCC BAA-1116).